Consider the following 271-residue polypeptide: Imidazole glycerol phosphate synthase subunit HisF (271 aa).

Active-site residues include Asp12 and Asp136.

The protein belongs to the HisA/HisF family. In terms of assembly, heterodimer of HisH and HisF.

It is found in the cytoplasm. It carries out the reaction 5-[(5-phospho-1-deoxy-D-ribulos-1-ylimino)methylamino]-1-(5-phospho-beta-D-ribosyl)imidazole-4-carboxamide + L-glutamine = D-erythro-1-(imidazol-4-yl)glycerol 3-phosphate + 5-amino-1-(5-phospho-beta-D-ribosyl)imidazole-4-carboxamide + L-glutamate + H(+). The protein operates within amino-acid biosynthesis; L-histidine biosynthesis; L-histidine from 5-phospho-alpha-D-ribose 1-diphosphate: step 5/9. IGPS catalyzes the conversion of PRFAR and glutamine to IGP, AICAR and glutamate. The HisF subunit catalyzes the cyclization activity that produces IGP and AICAR from PRFAR using the ammonia provided by the HisH subunit. The protein is Imidazole glycerol phosphate synthase subunit HisF of Haloarcula marismortui (strain ATCC 43049 / DSM 3752 / JCM 8966 / VKM B-1809) (Halobacterium marismortui).